The sequence spans 201 residues: Ribosome maturation factor RimP (201 aa).

It belongs to the RimP family.

It is found in the cytoplasm. Its function is as follows. Required for maturation of 30S ribosomal subunits. This chain is Ribosome maturation factor RimP, found in Rhizobium johnstonii (strain DSM 114642 / LMG 32736 / 3841) (Rhizobium leguminosarum bv. viciae).